The primary structure comprises 416 residues: LL-diaminopimelate aminotransferase (416 aa).

Substrate contacts are provided by Tyr25 and Gly52. Residues Tyr78, 115–116 (SK), Tyr140, Asn190, Tyr221, and 248–250 (SFS) each bind pyridoxal 5'-phosphate. The substrate site is built by Lys116, Tyr140, and Asn190. Position 251 is an N6-(pyridoxal phosphate)lysine (Lys251). Arg259 contacts pyridoxal 5'-phosphate.

This sequence belongs to the class-I pyridoxal-phosphate-dependent aminotransferase family. Homodimer. It depends on pyridoxal 5'-phosphate as a cofactor.

It is found in the cytoplasm. The catalysed reaction is (2S,6S)-2,6-diaminopimelate + 2-oxoglutarate = (S)-2,3,4,5-tetrahydrodipicolinate + L-glutamate + H2O + H(+). Its pathway is amino-acid biosynthesis; L-lysine biosynthesis via DAP pathway; LL-2,6-diaminopimelate from (S)-tetrahydrodipicolinate (aminotransferase route): step 1/1. Functionally, involved in the synthesis of meso-diaminopimelate (m-DAP or DL-DAP), required for both lysine and peptidoglycan biosynthesis. Catalyzes the direct conversion of tetrahydrodipicolinate to LL-diaminopimelate. This chain is LL-diaminopimelate aminotransferase (dapL), found in Methanococcus maripaludis (strain DSM 14266 / JCM 13030 / NBRC 101832 / S2 / LL).